The following is a 181-amino-acid chain: MTVEIANIVGSGDLGVELDVEPLEADLSTPYSEYDPSNYHGLYVRLEENGPLITVYRSGKYIITGCASMESLHETNEEFLGMLADLGVTEEDTQTGFTVENVVCTAMLDELVSLNALAIGLGLEVTEYEPEQFPGLVYRPEEIGAVLLVFANGKMVITGAKDTETAESAYEYFQSKVQELV.

2 consecutive repeat copies span residues 5 to 83 (IANI…LGML) and 99 to 177 (VENV…QSKV).

It belongs to the TBP family.

Its function is as follows. General factor that plays a role in the activation of archaeal genes transcribed by RNA polymerase. Binds specifically to the TATA box promoter element which lies close to the position of transcription initiation. The protein is TATA-box-binding protein C (tbpC1) of Halobacterium salinarum (strain ATCC 700922 / JCM 11081 / NRC-1) (Halobacterium halobium).